The chain runs to 112 residues: Putative transmembrane protein ORF112 (112 aa).

3 helical membrane passes run 26-46, 50-70, and 80-100; these read FWEV…GILV, ILVT…MYLF, and IFFP…LVGV.

The protein localises to the host membrane. The protein is Putative transmembrane protein ORF112 of Acidianus convivator (ABV).